Reading from the N-terminus, the 163-residue chain is Putative ribose 5-phosphate isomerase (163 aa).

16-17 lines the D-ribulose 5-phosphate pocket; it reads DD. Cys-76 functions as the Proton acceptor in the catalytic mechanism. D-ribulose 5-phosphate is bound by residues 77-81, Asn-110, Arg-120, and Lys-148; that span reads GTGLG.

This sequence belongs to the LacAB/RpiB family. Homodimer or homotetramer.

This Coccidioides immitis (strain RS) (Valley fever fungus) protein is Putative ribose 5-phosphate isomerase.